The sequence spans 366 residues: NADH-quinone oxidoreductase subunit D (366 aa).

This sequence belongs to the complex I 49 kDa subunit family. In terms of assembly, NDH-1 is composed of 14 different subunits. Subunits NuoB, C, D, E, F, and G constitute the peripheral sector of the complex.

It localises to the cell membrane. It catalyses the reaction a quinone + NADH + 5 H(+)(in) = a quinol + NAD(+) + 4 H(+)(out). NDH-1 shuttles electrons from NADH, via FMN and iron-sulfur (Fe-S) centers, to quinones in the respiratory chain. The immediate electron acceptor for the enzyme in this species is believed to be a menaquinone. Couples the redox reaction to proton translocation (for every two electrons transferred, four hydrogen ions are translocated across the cytoplasmic membrane), and thus conserves the redox energy in a proton gradient. The polypeptide is NADH-quinone oxidoreductase subunit D (Geobacillus thermodenitrificans (strain NG80-2)).